We begin with the raw amino-acid sequence, 133 residues long: Small ribosomal subunit protein uS11 (133 aa).

The protein belongs to the universal ribosomal protein uS11 family. Part of the 30S ribosomal subunit. Interacts with proteins S7 and S18. Binds to IF-3.

Functionally, located on the platform of the 30S subunit, it bridges several disparate RNA helices of the 16S rRNA. Forms part of the Shine-Dalgarno cleft in the 70S ribosome. The sequence is that of Small ribosomal subunit protein uS11 from Bordetella avium (strain 197N).